Consider the following 133-residue polypeptide: Small ribosomal subunit protein uS8 (133 aa).

Belongs to the universal ribosomal protein uS8 family. Part of the 30S ribosomal subunit. Contacts proteins S5 and S12.

Functionally, one of the primary rRNA binding proteins, it binds directly to 16S rRNA central domain where it helps coordinate assembly of the platform of the 30S subunit. The protein is Small ribosomal subunit protein uS8 of Chlamydia trachomatis serovar L2b (strain UCH-1/proctitis).